We begin with the raw amino-acid sequence, 221 residues long: Urease accessory protein UreE (221 aa).

Residues 160–194 (VPGTNKTTGDLAEEEQETERHEPHAHAIGEHHHEK) form a disordered region. Residues 177 to 194 (TERHEPHAHAIGEHHHEK) are compositionally biased toward basic and acidic residues.

Belongs to the UreE family.

The protein resides in the cytoplasm. Its function is as follows. Involved in urease metallocenter assembly. Binds nickel. Probably functions as a nickel donor during metallocenter assembly. This is Urease accessory protein UreE from Bifidobacterium longum subsp. infantis (strain ATCC 15697 / DSM 20088 / JCM 1222 / NCTC 11817 / S12).